The primary structure comprises 1314 residues: MSSDDSSLMASIIYYSQEKYFHHVLQAANVGLERYSSDPALQFFRAYGILGEDHIHDAISELEGIQSHPDTSLCAVIALLSAHKSCDTIDIEAVQELESSLKEIRRSASSTALYYASLFLWFMGHHDKAREYVDHMLKVSSGSKEGYVLKGWVDLTSSKPHVVKKSIKYLEQGTQDTKDVLGLMGKATYFMTQQNFSGALEVANQVTLACSNFLPALVLKMKLFLARQDWDQTIETGQRILEKDENNIDAWQILAVHELVKEGNTDRAADRVRNLIKALETGEPHNPNLHLKKILVISRLCGRHQVVHRLVSGFLERIFMATPSCALVATELGYLFILHQQVKEACLWYKEAMKLEENRLAALAGSIWCQILQGQLEEAAHQLEFLKEVQQSLGKSELLVFLQALVAAKKQRLEQEATALLKEAVEVHFSSMQGLALSPEYFEKLDPLFLVCIAKEYLHFCPKQPRSPGQLVSPLLKQVAMILSPVVKVAPAMMEPLYVTAQVKFLSGELENAQSTLQRCLELDPTFVDAHLLMSQIYLAQGNFAMCSHCLELGVSHNFQVRDHPLYHFIKARALNKTGDYAEAIKTLKMIIKVPTSKAEEGRKSQSPSVRPSERASILLELVEALRLNGELHEATKIMQDAINEFSGTPEEMRITVANVDLALSKGNVDLALNMLRGITPKQPCYTEAKEKMASIYLHTRKDVRLYIGCYVELCEHLPGPHSSLLLGDAFMNIQEPEKALEVYDEAYRKNPHDASLVSRIGQAYVKTHQYAKAINYYEAAQKISGQDFLCCELAELLLKLKKYHKAEKVLKQALERDSGVKDIPSMINEVKCLLLLAKVYKSHKKEEVMETLNLALDLQSRILKRVPLEQSEMIPFQNQLAASICIQIGEHHLAEKDYDSALKSYKDALAYSPTDSKVVLELAHLYLLLGQLDLCEQRCAPLLEMEQTHERAAVMLADLMFRRQNYETAINLYHQVLEKAPDNFLVLNKLVDLLRRSGKLEEAPAFFELAKKVSSRVPLEPGFNYCQGIYFWHIGQPNEALRFLNKARKDSTWGQLATCYMVQICLNPDNEIVGGEAFESLVGDSNSASRKESQQHGVRTAEKLLREFYPHSESGQTQLRLLQNLCLLATREKANVEVALGAFIEMAQAEKDSIPALLAMAQAYILLKQVPKARTQLKRLAKVPWTVDEAEDLEKSWLLLADIYCQGGKFDLALELLRRCLQYNKSCCRAYEYMGFIMEKEQSYKDAATNYELAWKYSHQANPAIGFKLAFNYLKDKKFVDAIEVCHSVLTEHPKYPKIREEILEKAQGSLRP.

19 TPR repeats span residues 110-143, 214-247, 326-359, 494-527, 529-561, 565-598, 616-649, 721-754, 755-788, 790-821, 831-863, 883-916, 918-950, 951-984, 986-1018, 1022-1055, 1195-1228, 1230-1262, and 1264-1297; these read STAL…SSGS, LPAL…DENN, ALVA…EENR, MEPL…DPTF, DAHL…NFQV, PLYH…PTSK, ASIL…FSGT, PHSS…NPHD, ASLV…SGQD, LCCE…DSGV, VKCL…QSRI, ASIC…SPTD, KVVL…EQTH, ERAA…APDN, LVLN…SSRV, PGFN…STWG, EKSW…NKSC, RAYE…SHQA, and PAIG…HPKY.

This sequence belongs to the TTC21 family. As to quaternary structure, interacts with IFT20. Interacts with IFT52. Interacts with IFT140. Interacts with CEP78; regulating IFT20 stability and localization.

Intraflagellar transport (IFT)-associated protein required for spermatogenesis. Required for sperm flagellar formation and intraflagellar transport. The protein is Tetratricopeptide repeat protein 21A (Ttc21a) of Mus musculus (Mouse).